A 396-amino-acid chain; its full sequence is Coiled-coil domain-containing protein 1 (396 aa).

The signal sequence occupies residues 1-21; it reads MAARSALCFLAIITLFVYACG. Coiled coils occupy residues 53–73, 109–129, 208–242, and 287–308; these read KIDSKLDSILSELQKEQNDRD, EVEKIEEAVDDVIDMIDDIID, DKESKKIDETVQELLDEIKDVVEDANDDVNDILDT, and YEEIEEKMDEVDDFIDDAIDEH. Acidic residues predominate over residues 231-256; sequence DANDDVNDILDTDDEDEDEDVQEEKD. 2 disordered regions span residues 231-260 and 288-378; these read DANDDVNDILDTDDEDEDEDVQEEKDEDIH and EEIE…VADD.

In terms of tissue distribution, component of the acid-insoluble and acid-soluble organic matrix of calcified layers of the shell (at protein level).

It localises to the secreted. The polypeptide is Coiled-coil domain-containing protein 1 (Lottia gigantea (Giant owl limpet)).